Reading from the N-terminus, the 306-residue chain is Acetaldehyde dehydrogenase 3 (306 aa).

The Acyl-thioester intermediate role is filled by cysteine 131. Residues 162–170 (SVGPGTRKN) and asparagine 273 each bind NAD(+).

This sequence belongs to the acetaldehyde dehydrogenase family.

It catalyses the reaction acetaldehyde + NAD(+) + CoA = acetyl-CoA + NADH + H(+). This Burkholderia lata (strain ATCC 17760 / DSM 23089 / LMG 22485 / NCIMB 9086 / R18194 / 383) protein is Acetaldehyde dehydrogenase 3.